The primary structure comprises 292 residues: Phosphoribosylaminoimidazole-succinocarboxamide synthase (292 aa).

Belongs to the SAICAR synthetase family.

The catalysed reaction is 5-amino-1-(5-phospho-D-ribosyl)imidazole-4-carboxylate + L-aspartate + ATP = (2S)-2-[5-amino-1-(5-phospho-beta-D-ribosyl)imidazole-4-carboxamido]succinate + ADP + phosphate + 2 H(+). The protein operates within purine metabolism; IMP biosynthesis via de novo pathway; 5-amino-1-(5-phospho-D-ribosyl)imidazole-4-carboxamide from 5-amino-1-(5-phospho-D-ribosyl)imidazole-4-carboxylate: step 1/2. This Elusimicrobium minutum (strain Pei191) protein is Phosphoribosylaminoimidazole-succinocarboxamide synthase.